The sequence spans 238 residues: uncharacterized protein (238 aa).

The disordered stretch occupies residues Glu-219–Ile-238. A compositionally biased stretch (acidic residues) spans Asp-227–Ile-238.

This is an uncharacterized protein from Buchnera aphidicola subsp. Acyrthosiphon pisum (strain APS) (Acyrthosiphon pisum symbiotic bacterium).